The chain runs to 255 residues: 1-(5-phosphoribosyl)-5-[(5-phosphoribosylamino)methylideneamino] imidazole-4-carboxamide isomerase (255 aa).

The Proton acceptor role is filled by Asp8. The active-site Proton donor is the Asp129.

It belongs to the HisA/HisF family.

The protein resides in the cytoplasm. It catalyses the reaction 1-(5-phospho-beta-D-ribosyl)-5-[(5-phospho-beta-D-ribosylamino)methylideneamino]imidazole-4-carboxamide = 5-[(5-phospho-1-deoxy-D-ribulos-1-ylimino)methylamino]-1-(5-phospho-beta-D-ribosyl)imidazole-4-carboxamide. It functions in the pathway amino-acid biosynthesis; L-histidine biosynthesis; L-histidine from 5-phospho-alpha-D-ribose 1-diphosphate: step 4/9. The protein is 1-(5-phosphoribosyl)-5-[(5-phosphoribosylamino)methylideneamino] imidazole-4-carboxamide isomerase of Synechococcus sp. (strain CC9605).